A 1141-amino-acid polypeptide reads, in one-letter code: cGMP-inhibited 3',5'-cyclic phosphodiesterase 3A (1141 aa).

The segment at 1-41 (MAVRGEAAQDWAKPGLRGPSPAPVARGDHRCRGGSPSSPRG) is disordered. The chain crosses the membrane as a helical span at residues 62–82 (SALCAGSLSVLLALLVRLVGG). The tract at residues 89–111 (ESSQEAAAEEEEEEGARGGVFPG) is disordered. A run of 5 helical transmembrane segments spans residues 127–147 (LQPA…GLCL), 157–177 (AVAL…SLGV), 182–202 (LLSL…TWLV), 207–227 (LGVL…VSLE), and 229–249 (FKVA…LLLA). Positions 262 to 309 (PAPPRERFGSQSSARTKEEIPGWKRRRRSSSVVAGEMSGCGGKSHRRT) are disordered. The residue at position 310 (S310) is a Phosphoserine. The segment covering 433 to 445 (RVSSTWTTTTSAT) has biased composition (low complexity). The disordered stretch occupies residues 433–479 (RVSSTWTTTTSATGLPTLEPAPVRRDRSASIKPHEAPSPSAVNPDSW). Residues 454–467 (PVRRDRSASIKPHE) are compositionally biased toward basic and acidic residues. Residues S492, S520, S524, and S533 each carry the phosphoserine modification. A disordered region spans residues 504 to 643 (HVKAKKQNRP…SDILQNDEEA (140 aa)). Pro residues predominate over residues 522-532 (VPSPSSSPPQG). Over residues 618 to 637 (TSQVTSDYETNNNSDSSDIL) the composition is skewed to polar residues. The interaction with SLFN12 stretch occupies residues 669–1141 (KPILAPEPLV…EETLAPQPDL (473 aa)). The PDEase domain occupies 674–1093 (PEPLVMDNLD…MMWKKVIEEE (420 aa)). H752 acts as the Proton donor in catalysis. An AMP-binding site is contributed by H752. Residues H756, H836, D837, and D950 each coordinate Mn(2+). 3 residues coordinate AMP: D837, D950, and Q1001. Position 837 (D837) interacts with Mg(2+). Disordered regions lie at residues 1024 to 1062 (GKWV…EAPR) and 1098 to 1141 (GTEN…QPDL). Residues 1029-1046 (DSDDSGDTDDPEEEEEEA) are compositionally biased toward acidic residues. A Phosphoserine modification is found at S1033. Phosphothreonine is present on T1036. Positions 1098–1113 (GTENQAPDQAPLQHSS) are enriched in polar residues. Residue K1120 forms a Glycyl lysine isopeptide (Lys-Gly) (interchain with G-Cter in SUMO2) linkage.

This sequence belongs to the cyclic nucleotide phosphodiesterase family. PDE3 subfamily. As to quaternary structure, homodimer. Interacts with PDE3A; direct low affinity interaction which is stimulated by binding of 17beta-estradiol/E2 to PDE3A and that positively regulates the ribonuclease activity of SLFN12. Mn(2+) is required as a cofactor. Mg(2+) serves as cofactor.

It is found in the membrane. It localises to the cytoplasm. Its subcellular location is the cytosol. The catalysed reaction is a nucleoside 3',5'-cyclic phosphate + H2O = a nucleoside 5'-phosphate + H(+). It catalyses the reaction 3',5'-cyclic AMP + H2O = AMP + H(+). The enzyme catalyses 3',5'-cyclic GMP + H2O = GMP + H(+). It carries out the reaction 3',5'-cyclic UMP + H2O = UMP + H(+). Its function is as follows. Cyclic nucleotide phosphodiesterase with specificity for the second messengers cAMP and cGMP, which are key regulators of many important physiological processes. Also has activity toward cUMP. Independently of its catalytic activity it is part of an E2/17beta-estradiol-induced pro-apoptotic signaling pathway. E2 stabilizes the PDE3A/SLFN12 complex in the cytosol, promoting the dephosphorylation of SLFN12 and activating its pro-apoptotic ribosomal RNA/rRNA ribonuclease activity. This apoptotic pathway might be relevant in tissues with high concentration of E2 and be for instance involved in placenta remodeling. This chain is cGMP-inhibited 3',5'-cyclic phosphodiesterase 3A, found in Rattus norvegicus (Rat).